The sequence spans 627 residues: Polyadenylate-binding protein, cytoplasmic and nuclear (627 aa).

The span at 1-11 (MSAADANQVQE) shows a compositional bias: polar residues. Positions 1–46 (MSAADANQVQESLEKLNLDSAPVASTEETEQTASGETEEAADSAQV) are disordered. 4 consecutive RRM domains span residues 51–129 (ASLY…WSQR), 139–216 (GNIF…KHIS), 232–309 (TNVY…RAQK), and 335–412 (VNLF…LAQR). Residues 511-535 (DFNNGANGGRQQRGYYPNRNQNQKG) show a composition bias toward low complexity. The segment at 511–537 (DFNNGANGGRQQRGYYPNRNQNQKGRQ) is disordered. The region spanning 537–618 (QQKDLAAIIA…ALTAFEEYKK (82 aa)) is the PABC domain.

It belongs to the polyadenylate-binding protein type-1 family.

Its subcellular location is the cytoplasm. The protein localises to the nucleus. In terms of biological role, binds the poly(A) tail of mRNA. Appears to be an important mediator of the multiple roles of the poly(A) tail in mRNA biogenesis, stability and translation. In the nucleus, involved in both mRNA cleavage and polyadenylation. Is also required for efficient mRNA export to the cytoplasm. Acts in concert with a poly(A)-specific nuclease (PAN) to affect poly(A) tail shortening, which may occur concomitantly with either nucleocytoplasmic mRNA transport or translational initiation. In the cytoplasm, stimulates translation initiation and regulates mRNA decay through translation termination-coupled poly(A) shortening, probably mediated by PAN. The sequence is that of Polyadenylate-binding protein, cytoplasmic and nuclear (PAB1) from Debaryomyces hansenii (strain ATCC 36239 / CBS 767 / BCRC 21394 / JCM 1990 / NBRC 0083 / IGC 2968) (Yeast).